A 78-amino-acid chain; its full sequence is MAKEAEMEFEGTVVEVLPNAKFKVQLENDIVIDAHVSGKIRMHYIRILPGDKVTVVISPYDMTRGRITYRKIAKKAEV.

An S1-like domain is found at 1-72 (MAKEAEMEFE…TRGRITYRKI (72 aa)).

It belongs to the IF-1 family. In terms of assembly, component of the 30S ribosomal translation pre-initiation complex which assembles on the 30S ribosome in the order IF-2 and IF-3, IF-1 and N-formylmethionyl-tRNA(fMet); mRNA recruitment can occur at any time during PIC assembly.

Its subcellular location is the cytoplasm. In terms of biological role, one of the essential components for the initiation of protein synthesis. Stabilizes the binding of IF-2 and IF-3 on the 30S subunit to which N-formylmethionyl-tRNA(fMet) subsequently binds. Helps modulate mRNA selection, yielding the 30S pre-initiation complex (PIC). Upon addition of the 50S ribosomal subunit IF-1, IF-2 and IF-3 are released leaving the mature 70S translation initiation complex. This chain is Translation initiation factor IF-1, found in Mesoplasma florum (strain ATCC 33453 / NBRC 100688 / NCTC 11704 / L1) (Acholeplasma florum).